The following is a 611-amino-acid chain: Lanthanide-dependent methanol dehydrogenase (611 aa).

The first 34 residues, 1 to 34, serve as a signal peptide directing secretion; the sequence is MTVKLKKPKKYAVAKNATLLAAFGLIGSLSLAKA. The cysteines at positions 138 and 139 are disulfide-linked. Pyrroloquinoline quinone-binding residues include Arg144, Thr188, Ser203, Gly204, and Gly205. Glu206 serves as a coordination point for Ce(3+). Position 206 (Glu206) interacts with Eu(3+). 2 residues coordinate pyrroloquinoline quinone: Thr270 and Trp272. Positions 290, 333, and 335 each coordinate Ce(3+). The Eu(3+) site is built by Asn290, Asp333, and Asp335. Pyrroloquinoline quinone is bound at residue Arg360. An intrachain disulfide couples Cys414 to Cys443. Residues Trp501 and Trp566 each contribute to the pyrroloquinoline quinone site.

The protein belongs to the bacterial PQQ dehydrogenase family. As to quaternary structure, homodimer. It depends on Ce(3+) as a cofactor. The cofactor is La(3+). Nd(3+) serves as cofactor. Requires Pr(3+) as cofactor. Eu(3+) is required as a cofactor. It depends on pyrroloquinoline quinone as a cofactor.

It localises to the periplasm. The catalysed reaction is 2 Fe(III)-[cytochrome cL] + methanol = 2 Fe(II)-[cytochrome cL] + formaldehyde + 2 H(+). The enzyme catalyses 4 Fe(III)-[cytochrome cL] + methanol + H2O = 4 Fe(II)-[cytochrome cL] + formate + 5 H(+). It catalyses the reaction 2 Fe(III)-[cytochrome cL] + a primary alcohol = 2 Fe(II)-[cytochrome cL] + an aldehyde + 2 H(+). The protein operates within one-carbon metabolism; methanol degradation. In terms of biological role, catalyzes the oxidation of methanol to formaldehyde or formate in the presence of lanthanides (Ln). Is a key enzyme in methane/methanol metabolism, allowing M.fumariolicum to grow on methane as the sole carbon and energy source. Can also act on other primary alcohols in vitro, such as ethanol, 1-propanol, 1-butanol, and 1-hexanol, but is not able to oxidize secondary alcohols and acetaldehyde. Uses a specific cytochrome cL, encoded by the adjacent gene in the locus, as electron acceptor. The sequence is that of Lanthanide-dependent methanol dehydrogenase from Methylacidiphilum fumariolicum (strain SolV).